Consider the following 362-residue polypeptide: Molybdopterin synthase catalytic subunit (362 aa).

Residues His-101–Arg-102, Lys-117, and Lys-124–Glu-126 contribute to the substrate site.

It belongs to the MoaE family. MOCS2B subfamily. In terms of assembly, heterotetramer; composed of 2 small (Mocs2A) and 2 large (Mocs2B) subunits.

The protein resides in the cytoplasm. It carries out the reaction 2 [molybdopterin-synthase sulfur-carrier protein]-C-terminal-Gly-aminoethanethioate + cyclic pyranopterin phosphate + H2O = molybdopterin + 2 [molybdopterin-synthase sulfur-carrier protein]-C-terminal Gly-Gly + 2 H(+). It participates in cofactor biosynthesis; molybdopterin biosynthesis. In terms of biological role, catalytic subunit of the molybdopterin synthase complex, a complex that catalyzes the conversion of precursor Z into molybdopterin. Acts by mediating the incorporation of 2 sulfur atoms from thiocarboxylated Mocs2A into precursor Z to generate a dithiolene group. The protein is Molybdopterin synthase catalytic subunit of Drosophila grimshawi (Hawaiian fruit fly).